We begin with the raw amino-acid sequence, 188 residues long: Protein GrpE (188 aa).

Over residues 1–10 the composition is skewed to polar residues; it reads MPDPTQNPNV. The interval 1-35 is disordered; the sequence is MPDPTQNPNVTPELEQHAAPEAAAEAAPESSADVM. The segment covering 19–32 has biased composition (low complexity); the sequence is APEAAAEAAPESSA.

This sequence belongs to the GrpE family. As to quaternary structure, homodimer.

The protein localises to the cytoplasm. Participates actively in the response to hyperosmotic and heat shock by preventing the aggregation of stress-denatured proteins, in association with DnaK and GrpE. It is the nucleotide exchange factor for DnaK and may function as a thermosensor. Unfolded proteins bind initially to DnaJ; upon interaction with the DnaJ-bound protein, DnaK hydrolyzes its bound ATP, resulting in the formation of a stable complex. GrpE releases ADP from DnaK; ATP binding to DnaK triggers the release of the substrate protein, thus completing the reaction cycle. Several rounds of ATP-dependent interactions between DnaJ, DnaK and GrpE are required for fully efficient folding. In Azoarcus sp. (strain BH72), this protein is Protein GrpE.